We begin with the raw amino-acid sequence, 307 residues long: Actin maturation protease (307 aa).

The tract at residues 1–34 is disordered; sequence MSLENDAAAPPPPPLPPPPPPQPPSLARSESSKK. A compositionally biased stretch (pro residues) spans 9–24; the sequence is APPPPPLPPPPPPQPP. The tract at residues 80 to 200 is peptidase C39-like; that stretch reads SLIQDGPQCG…WAVASGILLG (121 aa). Residue Cys-88 is part of the active site.

It belongs to the ACTMAP family.

It localises to the cytoplasm. The enzyme catalyses N-terminal N(alpha)-acetyl-L-methionyl-L-aspartyl-[protein] + H2O = N-terminal L-aspartyl-[protein] + N-acetyl-L-methionine. It carries out the reaction N-terminal N(alpha)-acetyl-L-methionyl-L-glutamyl-[protein] + H2O = N-terminal L-glutamyl-[protein] + N-acetyl-L-methionine. It catalyses the reaction N-terminal N(alpha)-acetyl-L-cysteinyl-L-aspartyl-[protein] + H2O = N-terminal L-aspartyl-[protein] + N-acetyl-L-cysteine. The catalysed reaction is N-terminal N(alpha)-acetyl-L-cysteinyl-L-glutamyl-[protein] + H2O = N-terminal L-glutamyl-[protein] + N-acetyl-L-cysteine. In terms of biological role, actin maturation protease that specifically mediates the cleavage of immature acetylated N-terminal actin, thereby contributing to actin maturation. Cleaves N-terminal acetylated methionine of immature cytoplasmic actin after translation. Cleaves N-terminal acetylated cysteine of muscle actin after canonical removal of N-terminal methionine. The protein is Actin maturation protease of Danio rerio (Zebrafish).